Reading from the N-terminus, the 691-residue chain is Elongation factor G (691 aa).

The region spanning 8–283 (EDYRNFGIMA…AVVDYLPTPI (276 aa)) is the tr-type G domain. Residues 17–24 (AHIDAGKT), 81–85 (DTPGH), and 135–138 (NKMD) contribute to the GTP site.

It belongs to the TRAFAC class translation factor GTPase superfamily. Classic translation factor GTPase family. EF-G/EF-2 subfamily.

The protein resides in the cytoplasm. Functionally, catalyzes the GTP-dependent ribosomal translocation step during translation elongation. During this step, the ribosome changes from the pre-translocational (PRE) to the post-translocational (POST) state as the newly formed A-site-bound peptidyl-tRNA and P-site-bound deacylated tRNA move to the P and E sites, respectively. Catalyzes the coordinated movement of the two tRNA molecules, the mRNA and conformational changes in the ribosome. This is Elongation factor G from Beijerinckia indica subsp. indica (strain ATCC 9039 / DSM 1715 / NCIMB 8712).